The sequence spans 399 residues: S-adenosylmethionine synthase (399 aa).

Position 17 (H17) interacts with ATP. D19 provides a ligand contact to Mg(2+). A K(+)-binding site is contributed by E52. Residues E65 and Q109 each coordinate L-methionine. The flexible loop stretch occupies residues 109-119 (QSADIAQGVDA). Residues 177–179 (DSK), 243–244 (KF), D252, 258–259 (RK), A275, and K279 each bind ATP. D252 is an L-methionine binding site. K283 is a binding site for L-methionine.

Belongs to the AdoMet synthase family. In terms of assembly, homotetramer; dimer of dimers. Mg(2+) is required as a cofactor. It depends on K(+) as a cofactor.

It localises to the cytoplasm. The catalysed reaction is L-methionine + ATP + H2O = S-adenosyl-L-methionine + phosphate + diphosphate. It participates in amino-acid biosynthesis; S-adenosyl-L-methionine biosynthesis; S-adenosyl-L-methionine from L-methionine: step 1/1. Catalyzes the formation of S-adenosylmethionine (AdoMet) from methionine and ATP. The overall synthetic reaction is composed of two sequential steps, AdoMet formation and the subsequent tripolyphosphate hydrolysis which occurs prior to release of AdoMet from the enzyme. The protein is S-adenosylmethionine synthase of Bradyrhizobium sp. (strain ORS 278).